The primary structure comprises 704 residues: Ion-translocating oxidoreductase complex subunit C (704 aa).

2 consecutive 4Fe-4S ferredoxin-type domains span residues 368-397 (MGAPQEEKSCIRCSACADACPADLLPQQLY) and 407-436 (KATAHHIADCIECGACAWVCPSNIPLVQYF). 8 residues coordinate [4Fe-4S] cluster: Cys-377, Cys-380, Cys-383, Cys-387, Cys-416, Cys-419, Cys-422, and Cys-426. The segment at 536–685 (RAKQAAHPMA…ADPRKAAVAA (150 aa)) is disordered. Residues 556 to 565 (KAAVEAAIAR) show a composition bias toward low complexity.

It belongs to the 4Fe4S bacterial-type ferredoxin family. RnfC subfamily. The complex is composed of six subunits: RsxA, RsxB, RsxC, RsxD, RsxE and RsxG. It depends on [4Fe-4S] cluster as a cofactor.

The protein localises to the cell inner membrane. Its function is as follows. Part of a membrane-bound complex that couples electron transfer with translocation of ions across the membrane. Required to maintain the reduced state of SoxR. This is Ion-translocating oxidoreductase complex subunit C from Salmonella dublin (strain CT_02021853).